We begin with the raw amino-acid sequence, 179 residues long: Lipoprotein signal peptidase (179 aa).

Helical transmembrane passes span 10–30, 48–68, 75–95, and 101–121; these read LFQF…AIII, VPVL…AFSF, WQHY…IFWL, and NAMI…GNLI. Active-site residues include D131 and D149. Residues 141–161 traverse the membrane as a helical segment; sequence HFPAFNIADSAITIGTILLLI.

This sequence belongs to the peptidase A8 family.

It is found in the cell inner membrane. The enzyme catalyses Release of signal peptides from bacterial membrane prolipoproteins. Hydrolyzes -Xaa-Yaa-Zaa-|-(S,diacylglyceryl)Cys-, in which Xaa is hydrophobic (preferably Leu), and Yaa (Ala or Ser) and Zaa (Gly or Ala) have small, neutral side chains.. It functions in the pathway protein modification; lipoprotein biosynthesis (signal peptide cleavage). This protein specifically catalyzes the removal of signal peptides from prolipoproteins. The sequence is that of Lipoprotein signal peptidase from Acinetobacter baylyi (strain ATCC 33305 / BD413 / ADP1).